Reading from the N-terminus, the 358-residue chain is Protein-glutamate methylesterase/protein-glutamine glutaminase 3 (358 aa).

Residues lysine 2–leucine 118 enclose the Response regulatory domain. Aspartate 52 bears the 4-aspartylphosphate mark. The CheB-type methylesterase domain occupies asparagine 155–lysine 325. Residues serine 167, histidine 194, and aspartate 291 contribute to the active site.

Belongs to the CheB family. In terms of processing, phosphorylated by CheA. Phosphorylation of the N-terminal regulatory domain activates the methylesterase activity.

The protein resides in the cytoplasm. The enzyme catalyses [protein]-L-glutamate 5-O-methyl ester + H2O = L-glutamyl-[protein] + methanol + H(+). It catalyses the reaction L-glutaminyl-[protein] + H2O = L-glutamyl-[protein] + NH4(+). Functionally, involved in chemotaxis. Part of a chemotaxis signal transduction system that modulates chemotaxis in response to various stimuli. Catalyzes the demethylation of specific methylglutamate residues introduced into the chemoreceptors (methyl-accepting chemotaxis proteins or MCP) by CheR. Also mediates the irreversible deamidation of specific glutamine residues to glutamic acid. This is Protein-glutamate methylesterase/protein-glutamine glutaminase 3 from Vibrio cholerae serotype O1 (strain ATCC 39315 / El Tor Inaba N16961).